We begin with the raw amino-acid sequence, 664 residues long: Ubiquinol oxidase subunit 1 (664 aa).

2 consecutive transmembrane segments (helical) span residues 15 to 35 (PILVGTFIGVVIVGVAVLGLI) and 57 to 77 (LAAMYIILALVALFRGFADAI). His106 is a binding site for heme b. A run of 12 helical transmembrane segments spans residues 109–129 (IMIFFLAMAFMTGLFNFIVPL), 136–156 (VAFPFLNNLSFWMTAVAFILV), 190–210 (YIWAVQISGVGTLLTGVNFFV), 233–253 (LCASILIMVAFPVLTVAVGLL), 278–298 (LIWAWGHPEVYILVIPAFGVF), 316–336 (MVYATCSIMVLSFLVWVHHFF), 347–367 (FFGIATMIISIPTGIKLFNWL), 383–403 (WAVGFMITFTIGGMTGVMLAI), 414–434 (LFLIAHFHNTIIGGVYFGYIC), 456–476 (AFWFWFVGFYCAFVPLYIVGF), 490–510 (AWHPWLLVAEVGAVLVMLGIA), and 603–623 (ALIFGFAAVWYIWWLAAVGLV). The Cu cation site is built by His284, Tyr288, His333, and His334. The 1'-histidyl-3'-tyrosine (His-Tyr) cross-link spans 284–288 (HPEVY). His419 is a binding site for Fe(II)-heme a. Position 421 (His421) interacts with heme b.

This sequence belongs to the heme-copper respiratory oxidase family. As to quaternary structure, heterotetramer of the subunits 1, 2, 3 and 4.

It is found in the cell membrane. In terms of biological role, catalytic subunit of the enzyme. Electrons originating in a quinol are transferred to the bimetallic center formed by heme a and copper B. The chain is Ubiquinol oxidase subunit 1 (cyaA) from Acetobacter aceti.